The primary structure comprises 469 residues: Argininosuccinate lyase (469 aa).

The protein belongs to the lyase 1 family. Argininosuccinate lyase subfamily.

The protein localises to the cytoplasm. The enzyme catalyses 2-(N(omega)-L-arginino)succinate = fumarate + L-arginine. Its pathway is amino-acid biosynthesis; L-arginine biosynthesis; L-arginine from L-ornithine and carbamoyl phosphate: step 3/3. The sequence is that of Argininosuccinate lyase from Mycolicibacterium smegmatis (strain ATCC 700084 / mc(2)155) (Mycobacterium smegmatis).